Here is a 476-residue protein sequence, read N- to C-terminus: MSYEERANAHPNLGDESDVEEEALVNDYREQVNFDDGMSELDRTTSLGGGSQTQDLQAQLAAAATPLEYQATLETKFASYDNYCSLFHYILNSDGPVELEVPSYYWAWDVIDEFIYQFESFCRYRNRVARSGSNEEEAQLLRENPNTWGCYSVLNVLYSLIQRSQINEQLAAIKRGEDPLAFAGEYGSRPLYKMLGYFSIIGLLRVHCLLGDFSLALKTLDDIEMNKKAMFARVMAAHFTTYYYVGFSYMMMRRYADAIRMFSHILVYVSRTKNFQKGGNSYDAIAKKNDQMYALIAICVALHPTRLDDTIHSALREKYGEQLNRLQHGGPEALPLFEELFRSACPKFISPTPPDFENPALNVDPVDHHTAIFMDEVKNTLYNPTIRSYLKLYTTMDLKKLAGFLEVEPEKLRSWLLINKQRSRQVRWVEGGLLEGEPVNANDLDYALENDLIHVSETKAGRRLVDWYLRNLARVY.

The PCI domain occupies 257 to 452 (DAIRMFSHIL…DLDYALENDL (196 aa)).

The protein belongs to the eIF-3 subunit L family. As to quaternary structure, component of the eukaryotic translation initiation factor 3 (eIF-3) complex.

The protein localises to the cytoplasm. Component of the eukaryotic translation initiation factor 3 (eIF-3) complex, which is involved in protein synthesis of a specialized repertoire of mRNAs and, together with other initiation factors, stimulates binding of mRNA and methionyl-tRNAi to the 40S ribosome. The eIF-3 complex specifically targets and initiates translation of a subset of mRNAs involved in cell proliferation. The protein is Eukaryotic translation initiation factor 3 subunit L of Aspergillus niger (strain ATCC MYA-4892 / CBS 513.88 / FGSC A1513).